Reading from the N-terminus, the 267-residue chain is Ribosomal RNA large subunit methyltransferase E (267 aa).

Residues glycine 50, tryptophan 52, aspartate 68, aspartate 84, and aspartate 109 each coordinate S-adenosyl-L-methionine. The Proton acceptor role is filled by lysine 149. One can recognise a TRAM domain in the interval 196–255; the sequence is PLKIDDKFDVTIKKIGAKGNGIAFVEDFVVFMQDEVKKGENVRIKIVDVKPEFAFAIVIG.

This sequence belongs to the class I-like SAM-binding methyltransferase superfamily. RNA methyltransferase RlmE family.

The protein resides in the cytoplasm. It catalyses the reaction uridine(2552) in 23S rRNA + S-adenosyl-L-methionine = 2'-O-methyluridine(2552) in 23S rRNA + S-adenosyl-L-homocysteine + H(+). In terms of biological role, specifically methylates the uridine in position 2552 of 23S rRNA at the 2'-O position of the ribose in the fully assembled 50S ribosomal subunit. The protein is Ribosomal RNA large subunit methyltransferase E of Methanococcoides burtonii (strain DSM 6242 / NBRC 107633 / OCM 468 / ACE-M).